Here is a 120-residue protein sequence, read N- to C-terminus: SLVELGKMILQETGKNPVTSYGAYGCNCGVLGSGKPKDATDRCCYVHKCCYKKLTDCDPKKDRYSYSWKDKTIVCGENNSCLKELCECDKAVAICLRENLDTYNKKYNYLKPFCKKADPC.

7 disulfide bridges follow: C26-C114, C28-C44, C43-C95, C49-C120, C50-C88, C57-C81, and C75-C86.

Belongs to the phospholipase A2 family. Group II subfamily. K49 sub-subfamily. Monomer. Expressed by the venom gland.

The protein resides in the secreted. Its function is as follows. Snake venom phospholipase A2 homolog that lacks enzymatic activity. Shows moderate cytotoxicity against C2C12 myotubes (activity above 200 ug/mL). Also shows antibacterial activity against both Gram-positive and Gram-negative bacteria. A model of myotoxic mechanism has been proposed: an apo Lys49-PLA2 is activated by the entrance of a hydrophobic molecule (e.g. fatty acid) at the hydrophobic channel of the protein leading to a reorientation of a monomer. This reorientation causes a transition between 'inactive' to 'active' states, causing alignment of C-terminal and membrane-docking sites (MDoS) side-by-side and putting the membrane-disruption sites (MDiS) in the same plane, exposed to solvent and in a symmetric position for both monomers. The MDoS region stabilizes the toxin on membrane by the interaction of charged residues with phospholipid head groups. Subsequently, the MDiS region destabilizes the membrane with penetration of hydrophobic residues. This insertion causes a disorganization of the membrane, allowing an uncontrolled influx of ions (i.e. calcium and sodium), and eventually triggering irreversible intracellular alterations and cell death. This Lachesis muta muta (Bushmaster) protein is Basic phospholipase A2 homolog LmutTX.